The chain runs to 168 residues: Diphosphoinositol polyphosphate phosphohydrolase 1 (168 aa).

Met-1 carries the post-translational modification N-acetylmethionine. Substrate contacts are provided by residues Arg-10, Lys-18 to Arg-20, and Ser-39 to Arg-41. The Nudix hydrolase domain maps to Tyr-17–Ala-142. Gly-50 and Glu-66 together coordinate Mg(2+). A Nudix box motif is present at residues Gly-51–Gly-72. The active-site Proton acceptor is Glu-69. Mg(2+) is bound at residue Glu-70. Substrate is bound by residues Arg-89 to His-91, Arg-115, and Lys-133.

It belongs to the Nudix hydrolase family. DIPP subfamily. As to quaternary structure, monomer. The cofactor is Mg(2+). Requires Mn(2+) as cofactor. Zn(2+) serves as cofactor.

It localises to the cytoplasm. The protein localises to the nucleus. It carries out the reaction diphospho-myo-inositol polyphosphate + H2O = myo-inositol polyphosphate + phosphate.. The enzyme catalyses 5-diphospho-1D-myo-inositol 1,2,3,4,6-pentakisphosphate + H2O = 1D-myo-inositol hexakisphosphate + phosphate + H(+). The catalysed reaction is 3,5-bis(diphospho)-1D-myo-inositol 1,2,4,6-tetrakisphosphate + H2O = 3-diphospho-1D-myo-inositol 1,2,4,5,6-pentakisphosphate + phosphate + 2 H(+). It catalyses the reaction [phosphate](n+1) + n H2O = (n+1) phosphate + n H(+). It carries out the reaction P(1),P(5)-bis(5'-adenosyl) pentaphosphate + H2O = ADP + ATP + 2 H(+). The enzyme catalyses P(1),P(6)-bis(5'-adenosyl) hexaphosphate + H2O = 2 ATP + 2 H(+). The catalysed reaction is P(1),P(4)-bis(5'-adenosyl) tetraphosphate + H2O = AMP + ATP + 2 H(+). It catalyses the reaction a 5'-end (N(7)-methyl 5'-triphosphoguanosine)-ribonucleoside in mRNA + H2O = N(7)-methyl-GMP + a 5'-end diphospho-ribonucleoside in mRNA + 2 H(+). It carries out the reaction a 5'-end (N(7)-methyl 5'-triphosphoguanosine)-ribonucleoside in mRNA + H2O = N(7)-methyl-GDP + a 5'-end phospho-ribonucleoside in mRNA + 2 H(+). With respect to regulation, diphosphoinositol polyphosphate phosphohydrolase is inhibited by fluoride and InsP6. Functionally, cleaves a beta-phosphate from the diphosphate groups in PP-InsP5 (diphosphoinositol pentakisphosphate) and [PP]2-InsP4 (bisdiphosphoinositol tetrakisphosphate), suggesting that it may play a role in signal transduction. InsP6 (inositol hexakisphosphate) is not a substrate. Acts as a negative regulator of the ERK1/2 pathway. Also able to catalyze the hydrolysis of dinucleoside oligophosphates, with diadenosine 5',5'''-P1,P6-hexaphosphate (Ap6A) and diadenosine 5',5'''- P1,P5-pentaphosphate (Ap5A) being the preferred substrates. The major reaction products are ADP and p4a from Ap6A and ADP and ATP from Ap5A. Also able to hydrolyze 5- phosphoribose 1-diphosphate. Acts as a decapping enzyme that can hydrolyze both monomethylated and unmethylated capped RNAs. Hydrolyzes monomethylated capped RNA after both the alpha- and beta-phosphates generating m7GMP + ppRNA and m7GDP + pRNA. Modulates the stability of a subset of mRNAs implicated in cell motility. Divalent cations zinc, magnesium and manganese determine its substrate specificity. Exhibits endopolyphosphatase activity in the presence of zinc ions. Exhibits diphosphoinositol polyphosphate phosphohydrolase in the presence of magnesium ions and diadenosine hexaphosphate hydrolase activity in the presence of manganese ions. Plays an important role in limiting DNA damage and maintaining cell survival upon oxidative stress via its endopolyphosphatase activity. The protein is Diphosphoinositol polyphosphate phosphohydrolase 1 of Rattus norvegicus (Rat).